The primary structure comprises 276 residues: Large ribosomal subunit protein uL2 (276 aa).

A disordered region spans residues 223 to 276; it reads GVAMNPVDHPHGGGEGRGKGHHPTSPWGLPTKGYKTRRGKRPSDKFIVRRRNEA. 2 stretches are compositionally biased toward basic and acidic residues: residues 230–240 and 263–276; these read DHPHGGGEGRG and RPSDKFIVRRRNEA.

The protein belongs to the universal ribosomal protein uL2 family. In terms of assembly, part of the 50S ribosomal subunit. Forms a bridge to the 30S subunit in the 70S ribosome.

In terms of biological role, one of the primary rRNA binding proteins. Required for association of the 30S and 50S subunits to form the 70S ribosome, for tRNA binding and peptide bond formation. It has been suggested to have peptidyltransferase activity; this is somewhat controversial. Makes several contacts with the 16S rRNA in the 70S ribosome. This is Large ribosomal subunit protein uL2 from Thermotoga petrophila (strain ATCC BAA-488 / DSM 13995 / JCM 10881 / RKU-1).